A 184-amino-acid polypeptide reads, in one-letter code: dCTP deaminase (184 aa).

107 to 112 lines the dCTP pocket; it reads KSTYAR. Residue Glu-133 is the Proton donor/acceptor of the active site. Positions 152, 166, and 176 each coordinate dCTP.

Belongs to the dCTP deaminase family. As to quaternary structure, homotrimer.

The catalysed reaction is dCTP + H2O + H(+) = dUTP + NH4(+). It participates in pyrimidine metabolism; dUMP biosynthesis; dUMP from dCTP (dUTP route): step 1/2. Functionally, catalyzes the deamination of dCTP to dUTP. The sequence is that of dCTP deaminase from Granulibacter bethesdensis (strain ATCC BAA-1260 / CGDNIH1).